The primary structure comprises 323 residues: Mycothiol acetyltransferase (323 aa).

E44 is a 1D-myo-inositol 2-(L-cysteinylamino)-2-deoxy-alpha-D-glucopyranoside binding site. 98–100 (LAV) contacts acetyl-CoA. Positions 173 to 323 (VSLRAFIPGQ…DVMYGPKNGG (151 aa)) constitute an N-acetyltransferase domain. The 1D-myo-inositol 2-(L-cysteinylamino)-2-deoxy-alpha-D-glucopyranoside site is built by E200, K240, and E253. Acetyl-CoA is bound by residues 257–259 (VGV) and 264–270 (QGMGLGK). Residue Y291 coordinates 1D-myo-inositol 2-(L-cysteinylamino)-2-deoxy-alpha-D-glucopyranoside.

Belongs to the acetyltransferase family. MshD subfamily. In terms of assembly, monomer.

It carries out the reaction 1D-myo-inositol 2-(L-cysteinylamino)-2-deoxy-alpha-D-glucopyranoside + acetyl-CoA = mycothiol + CoA + H(+). In terms of biological role, catalyzes the transfer of acetyl from acetyl-CoA to desacetylmycothiol (Cys-GlcN-Ins) to form mycothiol. The sequence is that of Mycothiol acetyltransferase from Arthrobacter sp. (strain FB24).